Reading from the N-terminus, the 368-residue chain is Mitochondrial intermembrane space import and assembly protein 40 (368 aa).

A mitochondrion-targeting transit peptide spans 1-29; that stretch reads MYRNTMRSASRPVIASLRSSTIRAAPRRF. The Mitochondrial matrix segment spans residues 30–47; that stretch reads ASTAPADKPRSFKGSLVR. The helical; Signal-anchor for type II membrane protein transmembrane segment at 48–65 threads the bilayer; the sequence is LGLAFGAVYYYNTSPIFA. Residues 66–368 lie on the Mitochondrial intermembrane side of the membrane; it reads DEAISKTVPA…AAKKNAEKKQ (303 aa). A compositionally biased stretch (basic and acidic residues) spans 95 to 104; that stretch reads RKQIKAKSEE. Residues 95–144 are disordered; sequence RKQIKAKSEETAASSKTPESQQSNPQTAAADGSPAALEEEAGQQGAFNPE. Polar residues predominate over residues 105–121; that stretch reads TAASSKTPESQQSNPQT. Disulfide bonds link Cys-152–Cys-154, Cys-163–Cys-196, and Cys-173–Cys-186. A CHCH domain is found at 160-204; sequence DGPCGEEFKTAFSCFVFSQEEPKGMDCIDKFQGMQECFKKYPDIY. 2 consecutive short sequence motifs (cx9C motif) follow at residues 163 to 173 and 186 to 196; these read CGEEFKTAFSC and CIDKFQGMQEC. Residues 208–310 form a disordered region; that stretch reads LADDEDGAPT…GSRMVQDVAI (103 aa). Positions 240–263 are enriched in basic and acidic residues; the sequence is LARETKDKTAADATKFDDSQKPAE. The segment covering 264–280 has biased composition (low complexity); the sequence is SKTPAKTTSTSTDSAQK. The span at 283-295 shows a compositional bias: basic and acidic residues; it reads VDAHRDAEPKSDA.

Monomer. The cofactor is Cu(2+). Zn(2+) is required as a cofactor.

The protein localises to the mitochondrion inner membrane. Required for the import and folding of small cysteine-containing proteins (small Tim) in the mitochondrial intermembrane space (IMS). Forms a redox cycle with ERV1 that involves a disulfide relay system. Precursor proteins to be imported into the IMS are translocated in their reduced form into the mitochondria. The oxidized form of MIA40 forms a transient intermolecular disulfide bridge with the reduced precursor protein, resulting in oxidation of the precursor protein that now contains an intramolecular disulfide bond and is able to undergo folding in the IMS. The chain is Mitochondrial intermembrane space import and assembly protein 40 (MIA40) from Gibberella zeae (strain ATCC MYA-4620 / CBS 123657 / FGSC 9075 / NRRL 31084 / PH-1) (Wheat head blight fungus).